Reading from the N-terminus, the 208-residue chain is High frequency lysogenization protein HflD homolog (208 aa).

This sequence belongs to the HflD family.

Its subcellular location is the cytoplasm. It is found in the cell inner membrane. This chain is High frequency lysogenization protein HflD homolog, found in Photorhabdus laumondii subsp. laumondii (strain DSM 15139 / CIP 105565 / TT01) (Photorhabdus luminescens subsp. laumondii).